We begin with the raw amino-acid sequence, 96 residues long: MHMFYYSIYDRKARSYGDLISFPSGEKEAAIRWFRDVVMDSDSKNILHRYPEDFDFCYIGYFDKDKGRFYPVDAGIVTIINAGEFFLDSEYRQEEV.

Belongs to the microviridae C protein family.

In terms of biological role, plays a central role in the packaging of viral DNA into phage procapsid, which occurs in the late stage of infection. Can interact with the replicative complex after the completion of one round of DNA synthesis. When protein ORF5 is bound to the replicative form, the complex becomes accessible to procapsid and serves as a DNA packaging apparatus. The sequence is that of Protein ORF5 from Chlamydia phage 1 (Bacteriophage Chp1).